The following is a 102-amino-acid chain: Urease subunit beta (102 aa).

The protein belongs to the urease beta subunit family. Heterotrimer of UreA (gamma), UreB (beta) and UreC (alpha) subunits. Three heterotrimers associate to form the active enzyme.

The protein resides in the cytoplasm. The catalysed reaction is urea + 2 H2O + H(+) = hydrogencarbonate + 2 NH4(+). It functions in the pathway nitrogen metabolism; urea degradation; CO(2) and NH(3) from urea (urease route): step 1/1. This chain is Urease subunit beta, found in Bordetella pertussis (strain Tohama I / ATCC BAA-589 / NCTC 13251).